The primary structure comprises 212 residues: Thymidylate kinase (212 aa).

10 to 17 is a binding site for ATP; the sequence is GIDGCGKT.

It belongs to the thymidylate kinase family.

The catalysed reaction is dTMP + ATP = dTDP + ADP. In terms of biological role, phosphorylation of dTMP to form dTDP in both de novo and salvage pathways of dTTP synthesis. The chain is Thymidylate kinase from Synechococcus sp. (strain RCC307).